A 27-amino-acid polypeptide reads, in one-letter code: Alpha-amylase/trypsin inhibitor CM17 (27 aa).

This sequence belongs to the protease inhibitor I6 (cereal trypsin/alpha-amylase inhibitor) family. Developing endosperm.

The protein resides in the secreted. In terms of biological role, alpha-amylase/trypsin inhibitor. It could be involved in insect defense mechanisms. The sequence is that of Alpha-amylase/trypsin inhibitor CM17 from Triticum aestivum (Wheat).